Reading from the N-terminus, the 95-residue chain is Bombyxin F-1 (95 aa).

Residues 1–19 form the signal peptide; the sequence is MKLVVIVLLVISVSILVSA. 3 disulfide bridges follow: cysteine 29–cysteine 82, cysteine 41–cysteine 95, and cysteine 81–cysteine 86. A propeptide spans 53–71 (c peptide like); the sequence is NSDMVYEDSGMPELLPADT.

Belongs to the insulin family. As to quaternary structure, heterodimer of a B chain and an A chain linked by two disulfide bonds.

The protein localises to the secreted. In Bombyx mori (Silk moth), this protein is Bombyxin F-1 (BBXF1).